The following is a 598-amino-acid chain: Elongation factor 4 (598 aa).

The region spanning 2–183 (KHIRNFCIIA…AIIEKIPHPK (182 aa)) is the tr-type G domain. GTP is bound by residues 14-19 (DHGKST) and 130-133 (NKVD).

The protein belongs to the TRAFAC class translation factor GTPase superfamily. Classic translation factor GTPase family. LepA subfamily.

The protein localises to the cell inner membrane. It catalyses the reaction GTP + H2O = GDP + phosphate + H(+). Required for accurate and efficient protein synthesis under certain stress conditions. May act as a fidelity factor of the translation reaction, by catalyzing a one-codon backward translocation of tRNAs on improperly translocated ribosomes. Back-translocation proceeds from a post-translocation (POST) complex to a pre-translocation (PRE) complex, thus giving elongation factor G a second chance to translocate the tRNAs correctly. Binds to ribosomes in a GTP-dependent manner. The sequence is that of Elongation factor 4 from Flavobacterium psychrophilum (strain ATCC 49511 / DSM 21280 / CIP 103535 / JIP02/86).